Reading from the N-terminus, the 456-residue chain is Argininosuccinate lyase (456 aa).

The protein belongs to the lyase 1 family. Argininosuccinate lyase subfamily.

It is found in the cytoplasm. It catalyses the reaction 2-(N(omega)-L-arginino)succinate = fumarate + L-arginine. It participates in amino-acid biosynthesis; L-arginine biosynthesis; L-arginine from L-ornithine and carbamoyl phosphate: step 3/3. In Listeria monocytogenes serotype 4b (strain CLIP80459), this protein is Argininosuccinate lyase.